The chain runs to 311 residues: GTP cyclohydrolase FolE2 (311 aa).

The protein belongs to the GTP cyclohydrolase IV family.

The catalysed reaction is GTP + H2O = 7,8-dihydroneopterin 3'-triphosphate + formate + H(+). It participates in cofactor biosynthesis; 7,8-dihydroneopterin triphosphate biosynthesis; 7,8-dihydroneopterin triphosphate from GTP: step 1/1. Its function is as follows. Converts GTP to 7,8-dihydroneopterin triphosphate. In Hydrogenovibrio crunogenus (strain DSM 25203 / XCL-2) (Thiomicrospira crunogena), this protein is GTP cyclohydrolase FolE2.